A 260-amino-acid chain; its full sequence is DNA repair protein RecO (260 aa).

Belongs to the RecO family.

Involved in DNA repair and RecF pathway recombination. The chain is DNA repair protein RecO from Levilactobacillus brevis (strain ATCC 367 / BCRC 12310 / CIP 105137 / JCM 1170 / LMG 11437 / NCIMB 947 / NCTC 947) (Lactobacillus brevis).